The chain runs to 388 residues: Alpha-2B adrenergic receptor (388 aa).

The chain crosses the membrane as a helical span at residues 1–25; that stretch reads AIAAVITFLILFTIFGNALVILAVL. The Cytoplasmic segment spans residues 26–36; sequence TSRSLRAPQNL. The chain crosses the membrane as a helical span at residues 37-62; the sequence is FLVSLAAADILVATLIIPFSLANELL. Residues 63–72 lie on the Extracellular side of the membrane; the sequence is GYWYFRRTWC. C72 and C151 form a disulfide bridge. The chain crosses the membrane as a helical span at residues 73–95; the sequence is EVYLALDVLFCTSSIVHLCAISL. The Cytoplasmic segment spans residues 96-117; the sequence is DRYWAVSRALEYNSKRTPRXIK. Residues 118–140 traverse the membrane as a helical segment; the sequence is CIILTVWLIAAAISLPPLIYKGD. The Extracellular segment spans residues 141–156; it reads QGPQPRGRPQCKLNQE. A helical transmembrane segment spans residues 157–180; sequence AWYILSSSIGSFFAPCLIMILVYL. The Cytoplasmic portion of the chain corresponds to 181–352; the sequence is RIYVIAKRSN…LTREKRFTFV (172 aa). A disordered region spans residues 193 to 309; that stretch reads GPRAKGASRE…ASACNPPLQQ (117 aa). The span at 239–249 shows a compositional bias: basic and acidic residues; the sequence is PTGEKEGKTPE. Residues 279–291 are compositionally biased toward acidic residues; it reads PEEEAEEEEEECE. The span at 292 to 302 shows a compositional bias: low complexity; the sequence is PQAAPASSASA. A helical transmembrane segment spans residues 353–376; the sequence is LAVVIGVFVLCWFPFFFSYSLGAI. Residues 377 to 385 are Extracellular-facing; that stretch reads CPQRCKVPH. The chain crosses the membrane as a helical span at residues 386–388; that stretch reads GLF.

The protein belongs to the G-protein coupled receptor 1 family. Adrenergic receptor subfamily. ADRA2B sub-subfamily. As to quaternary structure, interacts with RAB26. Interacts with PPP1R9B.

The protein localises to the cell membrane. In terms of biological role, alpha-2 adrenergic receptors mediate the catecholamine-induced inhibition of adenylate cyclase through the action of G proteins. This chain is Alpha-2B adrenergic receptor (ADRA2B), found in Orycteropus afer (Aardvark).